Consider the following 628-residue polypeptide: 1-deoxy-D-xylulose-5-phosphate synthase (628 aa).

Residues His72 and 113–115 contribute to the thiamine diphosphate site; that span reads GHS. Residue Asp144 participates in Mg(2+) binding. Thiamine diphosphate contacts are provided by residues 145–146, Asn173, Tyr284, and Glu363; that span reads GA. Asn173 lines the Mg(2+) pocket.

This sequence belongs to the transketolase family. DXPS subfamily. As to quaternary structure, homodimer. The cofactor is Mg(2+). It depends on thiamine diphosphate as a cofactor.

It carries out the reaction D-glyceraldehyde 3-phosphate + pyruvate + H(+) = 1-deoxy-D-xylulose 5-phosphate + CO2. It participates in metabolic intermediate biosynthesis; 1-deoxy-D-xylulose 5-phosphate biosynthesis; 1-deoxy-D-xylulose 5-phosphate from D-glyceraldehyde 3-phosphate and pyruvate: step 1/1. In terms of biological role, catalyzes the acyloin condensation reaction between C atoms 2 and 3 of pyruvate and glyceraldehyde 3-phosphate to yield 1-deoxy-D-xylulose-5-phosphate (DXP). This is 1-deoxy-D-xylulose-5-phosphate synthase from Brevibacillus brevis (strain 47 / JCM 6285 / NBRC 100599).